The chain runs to 581 residues: Pyridine nucleotide-disulfide oxidoreductase domain-containing protein 2 (581 aa).

An FAD-binding site is contributed by 38–71; that stretch reads VVIGAGHNGLVAAAYLQRLGVNTAVFERRHVIGG.

This sequence belongs to the carotenoid/retinoid oxidoreductase family. Interacts with COX5B; this interaction may contribute to localize PYROXD2 to the inner face of the inner mitochondrial membrane.

The protein localises to the mitochondrion matrix. Probable oxidoreductase that may play a role as regulator of mitochondrial function. The chain is Pyridine nucleotide-disulfide oxidoreductase domain-containing protein 2 from Rattus norvegicus (Rat).